A 617-amino-acid polypeptide reads, in one-letter code: Secretogranin-2 (617 aa).

The first 27 residues, 1-27 (MAEAKTHWLGAALSLIPLIFLISGAEA), serve as a signal peptide directing secretion. The propeptide occupies 28-30 (ASF). A disordered region spans residues 123–147 (NEPQSVPKENKPHALNSEKNFPIDM). The residue at position 151 (Tyr151) is a Sulfotyrosine. 6 positions are modified to phosphoserine: Ser174, Ser268, Ser432, Ser532, Ser555, and Ser556. The segment at 552-583 (NQGSSQETDKLAPVSKRFPVGPPKNDDTPNRQ) is disordered.

The protein belongs to the chromogranin/secretogranin protein family. As to quaternary structure, interacts with Secretogranin III/SCG3.

It is found in the secreted. Its function is as follows. Neuroendocrine protein of the granin family that regulates the biogenesis of secretory granules. The protein is Secretogranin-2 (SCG2) of Macaca fascicularis (Crab-eating macaque).